Consider the following 577-residue polypeptide: Proline--tRNA ligase (577 aa).

It belongs to the class-II aminoacyl-tRNA synthetase family. ProS type 1 subfamily. As to quaternary structure, homodimer.

It localises to the cytoplasm. The catalysed reaction is tRNA(Pro) + L-proline + ATP = L-prolyl-tRNA(Pro) + AMP + diphosphate. Its function is as follows. Catalyzes the attachment of proline to tRNA(Pro) in a two-step reaction: proline is first activated by ATP to form Pro-AMP and then transferred to the acceptor end of tRNA(Pro). As ProRS can inadvertently accommodate and process non-cognate amino acids such as alanine and cysteine, to avoid such errors it has two additional distinct editing activities against alanine. One activity is designated as 'pretransfer' editing and involves the tRNA(Pro)-independent hydrolysis of activated Ala-AMP. The other activity is designated 'posttransfer' editing and involves deacylation of mischarged Ala-tRNA(Pro). The misacylated Cys-tRNA(Pro) is not edited by ProRS. The sequence is that of Proline--tRNA ligase from Helicobacter pylori (strain G27).